The following is a 697-amino-acid chain: DNA ligase (697 aa).

NAD(+)-binding positions include 41-45 (DPVYD), 90-91 (SL), and glutamate 129. Lysine 131 acts as the N6-AMP-lysine intermediate in catalysis. Residues arginine 152, glutamate 189, lysine 308, and lysine 332 each contribute to the NAD(+) site. Residues cysteine 426, cysteine 429, cysteine 444, and cysteine 449 each coordinate Zn(2+). A BRCT domain is found at 617–697 (AANHHLTGST…ALQNMLRGST (81 aa)).

Belongs to the NAD-dependent DNA ligase family. LigA subfamily. Requires Mg(2+) as cofactor. Mn(2+) serves as cofactor.

The catalysed reaction is NAD(+) + (deoxyribonucleotide)n-3'-hydroxyl + 5'-phospho-(deoxyribonucleotide)m = (deoxyribonucleotide)n+m + AMP + beta-nicotinamide D-nucleotide.. In terms of biological role, DNA ligase that catalyzes the formation of phosphodiester linkages between 5'-phosphoryl and 3'-hydroxyl groups in double-stranded DNA using NAD as a coenzyme and as the energy source for the reaction. It is essential for DNA replication and repair of damaged DNA. This Synechococcus sp. (strain CC9311) protein is DNA ligase.